The following is a 295-amino-acid chain: uncharacterized protein (295 aa).

This sequence belongs to the ROK (NagC/XylR) family.

This is an uncharacterized protein from Clostridium perfringens (strain 13 / Type A).